The primary structure comprises 525 residues: NGFI-A-binding protein 2 (525 aa).

The disordered stretch occupies residues 1–22 (MHRAPSPTAEQPPGGGDSARRT). Serine 6 bears the Phosphoserine mark. Residues 35–113 (ALPRTLGELQ…REWATNPGLF (79 aa)) form an NCD1 region. The tract at residues 135-237 (GTRKGSMSNG…GGTGGGPDRL (103 aa)) is disordered. Phosphoserine occurs at positions 157, 159, 162, and 171. The segment covering 212 to 234 (AGGGVPEGTGAGGLAAGGTGGGP) has biased composition (gly residues). An NCD2 region spans residues 267–356 (LLKLNKKLAR…SRQVARESTY (90 aa)). The tract at residues 353 to 384 (ESTYLSSLKGSRLHPEELGGPPLKKLKQEVGE) is necessary for nuclear localization. Lysine 379 participates in a covalent cross-link: Glycyl lysine isopeptide (Lys-Gly) (interchain with G-Cter in SUMO1). Positions 380–416 (QEVGEQSHPEIQQPPPGPESYVPPYRPSLEEDSASLS) are disordered. Serine 479 is subject to Phosphoserine. Residues 502–525 (PGPHPALVEGRRSSVKVEAEASRQ) are disordered. The span at 510-525 (EGRRSSVKVEAEASRQ) shows a compositional bias: basic and acidic residues. Lysine 517 participates in a covalent cross-link: Glycyl lysine isopeptide (Lys-Gly) (interchain with G-Cter in SUMO1); alternate. Lysine 517 participates in a covalent cross-link: Glycyl lysine isopeptide (Lys-Gly) (interchain with G-Cter in SUMO2); alternate.

Belongs to the NAB family. As to quaternary structure, homomultimers may associate with EGR1 bound to DNA. Sumoylation by EGR2 represses EGR2 transcriptional activity in hindbrain. As to expression, widely expressed at low levels. Highly expressed in melanoma cell lines.

It is found in the nucleus. Acts as a transcriptional repressor for zinc finger transcription factors EGR1 and EGR2. Isoform 2 lacks repression ability. This Homo sapiens (Human) protein is NGFI-A-binding protein 2 (NAB2).